The chain runs to 923 residues: Periplasmic nitrate reductase (923 aa).

Positions 1-30 (MNRRDFIKNTAIASAASVAGLSVPSSMLGA) form a signal peptide, tat-type signal. Positions 34 to 90 (WKWDKAVCRFCGTGCGIMIARKDGKIVATKGDPAAPVNRGLNCIKGYFNAKIMYGED) constitute a 4Fe-4S Mo/W bis-MGD-type domain. Positions 41, 44, 48, and 76 each coordinate [4Fe-4S] cluster. Residues lysine 78, glutamine 146, asparagine 171, cysteine 175, 208–215 (WGANMAEM), methionine 416, glutamine 420, asparagine 526, 551–552 (SD), lysine 574, aspartate 601, and 813–822 (TGRVLEHWHS) each bind Mo-bis(molybdopterin guanine dinucleotide). Tryptophan 889 contributes to the substrate binding site. The Mo-bis(molybdopterin guanine dinucleotide) site is built by asparagine 897 and lysine 914.

This sequence belongs to the prokaryotic molybdopterin-containing oxidoreductase family. NasA/NapA/NarB subfamily. In terms of assembly, component of the periplasmic nitrate reductase NapAB complex composed of NapA and NapB. The cofactor is [4Fe-4S] cluster. Requires Mo-bis(molybdopterin guanine dinucleotide) as cofactor. In terms of processing, predicted to be exported by the Tat system. The position of the signal peptide cleavage has not been experimentally proven.

It is found in the periplasm. The enzyme catalyses 2 Fe(II)-[cytochrome] + nitrate + 2 H(+) = 2 Fe(III)-[cytochrome] + nitrite + H2O. Its function is as follows. Catalytic subunit of the periplasmic nitrate reductase complex NapAB. Receives electrons from NapB and catalyzes the reduction of nitrate to nitrite. The sequence is that of Periplasmic nitrate reductase from Campylobacter jejuni subsp. jejuni serotype O:23/36 (strain 81-176).